Reading from the N-terminus, the 654-residue chain is MGRIPTRELSSYLLTGRVFSRDCTRLQRLPARNISKQHFAVGQPAQRRWNHTAPEAGHTTTTQPPPGQPAPHLRKILKDQAKASKAQAKGKKKRSSADNQTVPGWELTVGIEIHAQLNTDRKLFSPAPLASTEDNTRAPAPNSLVAPFDLAIPGTQPLFQQATLVPAIRAAVALNCAVQPVSSFDRKHYFHWDQPSGYQITQYYAPLARDGYVDLRARDGIAAQDVGGGEPLRIRVKQVQMEQDTAKTLARPDGVHWLDFNRCGAPLVEIISEPDIHHPATAAAFVRKVQMLLGAADACVVGMEKGGLRADVNVSVRRVEDGKTSSAKLGQRTEIKNLFSFKAVEDAIIAERDRQIKLLDEGGVVLGETRGWSLGSTETRRLRGKEGEVDYRYMPDPDLGPVLVGQDVVEHLKSTMGVMPDQELDDLVSSYGLSEKDAMSLMLLEDGGRLQFYYKTVDALEQRLQNQGDSTKVTAESLVQARILTGNWILHVLGSLTSENNQRDRAAAGLSERDLGVTSEGDAFISADDLADILFFLHTSRIRQGTAKDLLFAMFNEVMPAQYISTPAGIERYITDNDLWFSELSPQEYSELAESVLDEEEHVLKEFMGARYPQGKLMFLVGMMMKSGARERIDPATAQKVMRDVVETRVAAMK.

Residues 1 to 8 (MGRIPTRE) constitute a mitochondrion transit peptide. The tract at residues 79 to 101 (DQAKASKAQAKGKKKRSSADNQT) is disordered.

Belongs to the GatB/GatE family. GatB subfamily. As to quaternary structure, subunit of the heterotrimeric GatCAB amidotransferase (AdT) complex, composed of A, B and C subunits.

The protein resides in the mitochondrion. The catalysed reaction is L-glutamyl-tRNA(Gln) + L-glutamine + ATP + H2O = L-glutaminyl-tRNA(Gln) + L-glutamate + ADP + phosphate + H(+). Its function is as follows. Allows the formation of correctly charged Gln-tRNA(Gln) through the transamidation of misacylated Glu-tRNA(Gln) in the mitochondria. The reaction takes place in the presence of glutamine and ATP through an activated gamma-phospho-Glu-tRNA(Gln). The sequence is that of Glutamyl-tRNA(Gln) amidotransferase subunit B, mitochondrial from Pyricularia oryzae (strain 70-15 / ATCC MYA-4617 / FGSC 8958) (Rice blast fungus).